Consider the following 398-residue polypeptide: Protochlorophyllide reductase, chloroplastic (398 aa).

This sequence belongs to the short-chain dehydrogenases/reductases (SDR) family. POR subfamily.

It is found in the plastid. The protein localises to the chloroplast. The enzyme catalyses chlorophyllide a + NADP(+) = protochlorophyllide a + NADPH + H(+). It participates in porphyrin-containing compound metabolism; chlorophyll biosynthesis. Its function is as follows. Phototransformation of protochlorophyllide (Pchlide) to chlorophyllide (Chlide). This chain is Protochlorophyllide reductase, chloroplastic (POR1), found in Daucus carota (Wild carrot).